The sequence spans 2157 residues: Mediator of RNA polymerase II transcription subunit 12-like protein (2157 aa).

The interval 1-31 (MAAFGLLSYEQRPLKRPRLGPPDVYPQDPKQ) is disordered. At T462 the chain carries Phosphothreonine. Positions 1437-1456 (ELEKGQHLGSSSKKERDRQK) are enriched in basic and acidic residues. Disordered regions lie at residues 1437–1461 (ELEK…KSMS), 1724–1807 (RSYY…SQMT), and 2040–2157 (IDAV…PSHF). Residues 1771–1780 (TKGRKRKTKS) are compositionally biased toward basic residues. 3 stretches are compositionally biased toward low complexity: residues 2063-2076 (PRQQ…RLLQ), 2083-2101 (QQPQ…QSQA), and 2116-2136 (RQGL…RQLQ). A compositionally biased stretch (polar residues) spans 2137 to 2148 (KQLSSNQPQQGV).

This sequence belongs to the Mediator complex subunit 12 family. May be a component of the Mediator complex, which is known to be composed of MED1, MED4, MED6, MED7, MED8, MED9, MED10, MED11, MED12, MED13, MED13L, MED14, MED15, MED16, MED17, MED18, MED19, MED20, MED21, MED22, MED23, MED24, MED25, MED26, MED27, MED29, MED30, MED31, CCNC, CDK8 and CDC2L6/CDK11. The MED12, MED13, CCNC and CDK8 subunits form a distinct module termed the CDK8 module. Mediator containing the CDK8 module is less active than Mediator lacking this module in supporting transcriptional activation. Individual preparations of the Mediator complex lacking one or more distinct subunits have been variously termed ARC, CRSP, DRIP, PC2, SMCC and TRAP.

It localises to the nucleus. May be a component of the Mediator complex, a coactivator involved in the regulated transcription of nearly all RNA polymerase II-dependent genes. Mediator functions as a bridge to convey information from gene-specific regulatory proteins to the basal RNA polymerase II transcription machinery. Mediator is recruited to promoters by direct interactions with regulatory proteins and serves as a scaffold for the assembly of a functional preinitiation complex with RNA polymerase II and the general transcription factors. This is Mediator of RNA polymerase II transcription subunit 12-like protein (Med12l) from Mus musculus (Mouse).